Here is an 89-residue protein sequence, read N- to C-terminus: Insulin (89 aa).

3 cysteine pairs are disulfide-bonded: C7-C75, C19-C88, and C74-C79. Residues 33 to 66 (DVGPLSAFRDLEPPLDTEMEDRFPYRQQLAGSKM) constitute a propeptide, c peptide.

It belongs to the insulin family. As to quaternary structure, heterodimer of a B chain and an A chain linked by two disulfide bonds.

Its subcellular location is the secreted. In terms of biological role, insulin decreases blood glucose concentration. It increases cell permeability to monosaccharides, amino acids and fatty acids. It accelerates glycolysis, the pentose phosphate cycle, and glycogen synthesis in liver. In Callorhinchus milii (Ghost shark), this protein is Insulin (ins).